Consider the following 67-residue polypeptide: MPQLDTSTWFTVILSMIISLFMLLQLKISSHSFYLDPKTMSLKTTKHNLPWENKWTKTYLPLSLHLH.

The helical transmembrane segment at 8–24 threads the bilayer; sequence TWFTVILSMIISLFMLL. The residue at position 54 (Lys54) is an N6-acetyllysine; alternate. Position 54 is an N6-succinyllysine; alternate (Lys54). At Lys57 the chain carries N6-acetyllysine.

The protein belongs to the ATPase protein 8 family. As to quaternary structure, component of the ATP synthase complex composed at least of ATP5F1A/subunit alpha, ATP5F1B/subunit beta, ATP5MC1/subunit c (homooctomer), MT-ATP6/subunit a, MT-ATP8/subunit 8, ATP5ME/subunit e, ATP5MF/subunit f, ATP5MG/subunit g, ATP5MK/subunit k, ATP5MJ/subunit j, ATP5F1C/subunit gamma, ATP5F1D/subunit delta, ATP5F1E/subunit epsilon, ATP5PF/subunit F6, ATP5PB/subunit b, ATP5PD/subunit d, ATP5PO/subunit OSCP. ATP synthase complex consists of a soluble F(1) head domain (subunits alpha(3) and beta(3)) - the catalytic core - and a membrane F(0) domain - the membrane proton channel (subunits c, a, 8, e, f, g, k and j). These two domains are linked by a central stalk (subunits gamma, delta, and epsilon) rotating inside the F1 region and a stationary peripheral stalk (subunits F6, b, d, and OSCP). Interacts with PRICKLE3.

It localises to the mitochondrion membrane. Functionally, subunit 8, of the mitochondrial membrane ATP synthase complex (F(1)F(0) ATP synthase or Complex V) that produces ATP from ADP in the presence of a proton gradient across the membrane which is generated by electron transport complexes of the respiratory chain. ATP synthase complex consist of a soluble F(1) head domain - the catalytic core - and a membrane F(1) domain - the membrane proton channel. These two domains are linked by a central stalk rotating inside the F(1) region and a stationary peripheral stalk. During catalysis, ATP synthesis in the catalytic domain of F(1) is coupled via a rotary mechanism of the central stalk subunits to proton translocation. In vivo, can only synthesize ATP although its ATP hydrolase activity can be activated artificially in vitro. Part of the complex F(0) domain. The protein is ATP synthase F(0) complex subunit 8 of Cavia porcellus (Guinea pig).